The following is a 610-amino-acid chain: Glutamine--fructose-6-phosphate aminotransferase [isomerizing] (610 aa).

The Nucleophile; for GATase activity role is filled by C2. Residues 2–220 (CGIISAISKK…EGDIAILSHK (219 aa)) enclose the Glutamine amidotransferase type-2 domain. 2 consecutive SIS domains span residues 289 to 429 (AHAL…LKTN) and 461 to 600 (LAKE…IDKP). Residue K605 is the For Fru-6P isomerization activity of the active site.

As to quaternary structure, homodimer.

Its subcellular location is the cytoplasm. The enzyme catalyses D-fructose 6-phosphate + L-glutamine = D-glucosamine 6-phosphate + L-glutamate. In terms of biological role, catalyzes the first step in hexosamine metabolism, converting fructose-6P into glucosamine-6P using glutamine as a nitrogen source. The polypeptide is Glutamine--fructose-6-phosphate aminotransferase [isomerizing] (Buchnera aphidicola subsp. Baizongia pistaciae (strain Bp)).